A 208-amino-acid polypeptide reads, in one-letter code: ER membrane protein complex subunit 8/9 homolog (208 aa).

The 136-residue stretch at 11 to 146 (YEISQNAYIK…ERSPVMQLCV (136 aa)) folds into the MPN domain.

It belongs to the EMC8/EMC9 family.

This Arabidopsis thaliana (Mouse-ear cress) protein is ER membrane protein complex subunit 8/9 homolog (EMB2731).